Consider the following 154-residue polypeptide: Probable prefoldin subunit 5 (154 aa).

It belongs to the prefoldin subunit alpha family. In terms of assembly, heterohexamer of two PFD-alpha type and four PFD-beta type subunits.

Its function is as follows. Binds specifically to cytosolic chaperonin (c-CPN) and transfers target proteins to it. Binds to nascent polypeptide chain and promotes folding in an environment in which there are many competing pathways for nonnative proteins. This chain is Probable prefoldin subunit 5, found in Caenorhabditis briggsae.